The sequence spans 329 residues: Ribosomal RNA small subunit methyltransferase H (329 aa).

Residues 46–48 (GGH), D65, F92, D113, and H120 contribute to the S-adenosyl-L-methionine site. The disordered stretch occupies residues 295–329 (RGAERPSPAEVAANPRAASARLRAAEKIRDTREAA). The span at 317-329 (RAAEKIRDTREAA) shows a compositional bias: basic and acidic residues.

It belongs to the methyltransferase superfamily. RsmH family.

The protein resides in the cytoplasm. The catalysed reaction is cytidine(1402) in 16S rRNA + S-adenosyl-L-methionine = N(4)-methylcytidine(1402) in 16S rRNA + S-adenosyl-L-homocysteine + H(+). In terms of biological role, specifically methylates the N4 position of cytidine in position 1402 (C1402) of 16S rRNA. The protein is Ribosomal RNA small subunit methyltransferase H of Acidothermus cellulolyticus (strain ATCC 43068 / DSM 8971 / 11B).